A 137-amino-acid chain; its full sequence is Cellular retinoic acid-binding protein 1 (137 aa).

Positions 21–31 (KALGVNAMLRK) match the Nuclear localization signal motif. 132–134 (RIY) is a binding site for all-trans-retinoate.

The protein belongs to the calycin superfamily. Fatty-acid binding protein (FABP) family.

It localises to the cytoplasm. Functionally, cytosolic CRABPs may regulate the access of retinoic acid to the nuclear retinoic acid receptors. The protein is Cellular retinoic acid-binding protein 1 (CRABP1) of Homo sapiens (Human).